We begin with the raw amino-acid sequence, 672 residues long: DNA ligase (672 aa).

NAD(+)-binding positions include 30 to 34 (DAVYD), 79 to 80 (SL), and Glu110. Lys112 (N6-AMP-lysine intermediate) is an active-site residue. The NAD(+) site is built by Arg133, Glu170, Lys287, and Lys311. Residues Cys405, Cys408, Cys423, and Cys429 each contribute to the Zn(2+) site. In terms of domain architecture, BRCT spans 590–672 (ADELPLSGKT…IALLTEHGAI (83 aa)).

It belongs to the NAD-dependent DNA ligase family. LigA subfamily. It depends on Mg(2+) as a cofactor. The cofactor is Mn(2+).

It catalyses the reaction NAD(+) + (deoxyribonucleotide)n-3'-hydroxyl + 5'-phospho-(deoxyribonucleotide)m = (deoxyribonucleotide)n+m + AMP + beta-nicotinamide D-nucleotide.. Functionally, DNA ligase that catalyzes the formation of phosphodiester linkages between 5'-phosphoryl and 3'-hydroxyl groups in double-stranded DNA using NAD as a coenzyme and as the energy source for the reaction. It is essential for DNA replication and repair of damaged DNA. The polypeptide is DNA ligase (Marinomonas sp. (strain MWYL1)).